The primary structure comprises 232 residues: 7-cyano-7-deazaguanine synthase (232 aa).

Leu-13–Leu-23 contributes to the ATP binding site. Zn(2+) is bound by residues Cys-194, Cys-204, Cys-207, and Cys-210.

This sequence belongs to the QueC family. The cofactor is Zn(2+).

It carries out the reaction 7-carboxy-7-deazaguanine + NH4(+) + ATP = 7-cyano-7-deazaguanine + ADP + phosphate + H2O + H(+). Its pathway is purine metabolism; 7-cyano-7-deazaguanine biosynthesis. Its function is as follows. Catalyzes the ATP-dependent conversion of 7-carboxy-7-deazaguanine (CDG) to 7-cyano-7-deazaguanine (preQ(0)). The chain is 7-cyano-7-deazaguanine synthase from Hydrogenovibrio crunogenus (strain DSM 25203 / XCL-2) (Thiomicrospira crunogena).